The chain runs to 325 residues: Necdin (325 aa).

Disordered stretches follow at residues 1–69 (MSEQ…IEDV) and 77–96 (AAEE…IPAP). The region spanning 102–301 (LVQKAHELMW…QAWPSRYREA (200 aa)) is the MAGE domain.

As to quaternary structure, binds to the transactivation domains of E2F1 and p53. Binds also SV40 large T antigen and adenovirus E1A. Interacts with nucleobindin 1 and 2. As to expression, brain specific. Not detected in other tissues. Expressed in postmitotic neurons. In adult brain the highest expression is in hypothalamus. Highly expressed in thalamus and midbrain. Relatively low levels are in cerebral cortex, hippocampus, striatum, olfactory bulb, cerebellum, pons and spinal cord. Also detected in neurally differentiated embryonal carcinoma cells.

Its subcellular location is the cytoplasm. It is found in the nucleus. The protein localises to the nucleoplasm. It localises to the nucleus matrix. In terms of biological role, growth suppressor that facilitates the entry of the cell into cell cycle arrest. Functionally similar to the retinoblastoma protein it binds to and represses the activity of cell-cycle-promoting proteins such as SV40 large T antigen, adenovirus E1A, and the transcription factor E2F. Necdin also interacts with p53 and works in an additive manner to inhibit cell growth. Also functions as a transcription factor and directly binds to specific guanosine-rich DNA sequences. In Mus musculus (Mouse), this protein is Necdin (Ndn).